The sequence spans 352 residues: Isopentenyl-diphosphate delta-isomerase (352 aa).

Residue 6-7 (RK) participates in substrate binding. FMN-binding positions include 63–65 (AMT), serine 93, and asparagine 122. 93–95 (SQR) contacts substrate. Glutamine 160 is a substrate binding site. A Mg(2+)-binding site is contributed by glutamate 161. FMN contacts are provided by residues lysine 192, threonine 221, 271-273 (GIR), and 292-293 (SQ).

It belongs to the IPP isomerase type 2 family. Homooctamer. Dimer of tetramers. FMN serves as cofactor. NADPH is required as a cofactor. It depends on Mg(2+) as a cofactor.

The protein localises to the cytoplasm. It carries out the reaction isopentenyl diphosphate = dimethylallyl diphosphate. Functionally, involved in the biosynthesis of isoprenoids. Catalyzes the 1,3-allylic rearrangement of the homoallylic substrate isopentenyl (IPP) to its allylic isomer, dimethylallyl diphosphate (DMAPP). The protein is Isopentenyl-diphosphate delta-isomerase of Pyrobaculum arsenaticum (strain DSM 13514 / JCM 11321 / PZ6).